A 295-amino-acid chain; its full sequence is Protein PAR32 (295 aa).

Residue Ala-2 is modified to N-acetylalanine. 7 positions are modified to phosphoserine: Ser-36, Ser-39, Ser-47, Ser-123, Ser-138, Ser-141, and Ser-147. A compositionally biased stretch (polar residues) spans 134–153; the sequence is SATRSHQSLHATTSSPNNNA. Disordered regions lie at residues 134–156 and 217–295; these read SATR…APIV and TSKK…TMFN. Positions 217–227 are enriched in basic residues; the sequence is TSKKPKNKLKG. Ser-246 is subject to Phosphoserine. A compositionally biased stretch (polar residues) spans 246–256; that stretch reads SPKSSRNTINH. The span at 265–274 shows a compositional bias: basic and acidic residues; that stretch reads KFNLKDDNGK. A compositionally biased stretch (basic residues) spans 275-284; sequence EKKKKKKKKS. Low complexity predominate over residues 285–295; the sequence is GFFSSLKTMFN.

Post-translationally, hyperphosphorylated after treatment with rapamycin in a TAP42-dependent manner.

Its subcellular location is the cytoplasm. Its function is as follows. Involved in resistance to cisplatin. This chain is Protein PAR32 (PAR32), found in Saccharomyces cerevisiae (strain ATCC 204508 / S288c) (Baker's yeast).